The sequence spans 500 residues: Cysteine-rich secretory protein LCCL domain-containing 1 (500 aa).

The N-terminal stretch at M1–A23 is a signal peptide. The region spanning L66 to Y206 is the SCP domain. Positions E254–R280 are enriched in basic and acidic residues. Positions E254–N281 are disordered. LCCL domains are found at residues M289–F384 and T390–K492. 4 disulfides stabilise this stretch: C295/C313, C317/C337, C396/C418, and C422/C445.

This sequence belongs to the CRISP family.

The protein localises to the secreted. The protein is Cysteine-rich secretory protein LCCL domain-containing 1 (CRISPLD1) of Homo sapiens (Human).